The following is a 110-amino-acid chain: MTGSGKTVTRVDLCEAVYKKVGLSRTESSAFVELVLKEITDCLEKGETVKLSSFGSFMVRKKGQRIGRNPKTGTEVPISPRRVMVFKPSAILKQRINGNSNGNGADTKAD.

The protein belongs to the bacterial histone-like protein family. In terms of assembly, heterodimer of an alpha and a beta chain.

Functionally, this protein is one of the two subunits of integration host factor, a specific DNA-binding protein that functions in genetic recombination as well as in transcriptional and translational control. In Nitrobacter hamburgensis (strain DSM 10229 / NCIMB 13809 / X14), this protein is Integration host factor subunit alpha.